The sequence spans 289 residues: Cytochrome bc1 complex cytochrome c subunit (289 aa).

Residues 1–11 (MKKLGFTRSSR) are compositionally biased toward basic residues. The segment at 1–28 (MKKLGFTRSSRRCSQPQEREQESERSRR) is disordered. A helical transmembrane segment spans residues 37–55 (GLLLLVALTVSGGLAAVLT). Cytochrome c domains follow at residues 69-149 (ALLR…QANG) and 170-248 (TDLG…RTVI). The heme c site is built by Cys-82, Cys-85, His-86, Cys-183, Cys-186, and His-187. A helical membrane pass occupies residues 267–287 (GMAIWIIGMVTAIGLALWIGA).

The cytochrome bc1 complex is composed of a cytochrome b (QcrB), the Rieske iron-sulfur protein (QcrA) and a diheme cytochrome c (QcrC) subunit. Post-translationally, binds 2 heme c groups covalently per subunit.

It is found in the cell membrane. The enzyme catalyses a quinol + 2 Fe(III)-[cytochrome c](out) = a quinone + 2 Fe(II)-[cytochrome c](out) + 2 H(+)(out). Cytochrome b subunit of the cytochrome bc1 complex, an essential component of the respiratory electron transport chain required for ATP synthesis. The bc1 complex catalyzes the oxidation of ubiquinol and the reduction of cytochrome c in the respiratory chain. The bc1 complex operates through a Q-cycle mechanism that couples electron transfer to generation of the proton gradient that drives ATP synthesis. The protein is Cytochrome bc1 complex cytochrome c subunit (qcrC) of Mycobacterium leprae (strain TN).